A 160-amino-acid chain; its full sequence is Respiratory supercomplex factor 1, mitochondrial (160 aa).

In terms of domain architecture, HIG1 spans 5–96 (PSSFDSKEAS…SSLKEKKSEE (92 aa)). Transmembrane regions (helical) follow at residues 33-49 (LVPL…ALAA) and 67-89 (RVGL…GSSL). Residues 88 to 160 (SLKEKKSEEE…DLESHIKNEK (73 aa)) are a coiled coil.

This sequence belongs to the RCF1 family. As to quaternary structure, associates with the respiratory chain complex III/complex IV supercomplex.

It localises to the mitochondrion membrane. Cytochrome c oxidase subunit which plays a role in assembly of respiratory supercomplexes. The polypeptide is Respiratory supercomplex factor 1, mitochondrial (RCF1) (Zygosaccharomyces rouxii (strain ATCC 2623 / CBS 732 / NBRC 1130 / NCYC 568 / NRRL Y-229)).